A 418-amino-acid chain; its full sequence is Gamma-glutamyl phosphate reductase (418 aa).

Belongs to the gamma-glutamyl phosphate reductase family.

Its subcellular location is the cytoplasm. It carries out the reaction L-glutamate 5-semialdehyde + phosphate + NADP(+) = L-glutamyl 5-phosphate + NADPH + H(+). Its pathway is amino-acid biosynthesis; L-proline biosynthesis; L-glutamate 5-semialdehyde from L-glutamate: step 2/2. Catalyzes the NADPH-dependent reduction of L-glutamate 5-phosphate into L-glutamate 5-semialdehyde and phosphate. The product spontaneously undergoes cyclization to form 1-pyrroline-5-carboxylate. In Agathobacter rectalis (strain ATCC 33656 / DSM 3377 / JCM 17463 / KCTC 5835 / VPI 0990) (Eubacterium rectale), this protein is Gamma-glutamyl phosphate reductase.